The sequence spans 320 residues: Porphobilinogen deaminase (320 aa).

Residue Cys-251 is modified to S-(dipyrrolylmethanemethyl)cysteine.

The protein belongs to the HMBS family. In terms of assembly, monomer. Dipyrromethane serves as cofactor.

It catalyses the reaction 4 porphobilinogen + H2O = hydroxymethylbilane + 4 NH4(+). The protein operates within porphyrin-containing compound metabolism; protoporphyrin-IX biosynthesis; coproporphyrinogen-III from 5-aminolevulinate: step 2/4. Its function is as follows. Tetrapolymerization of the monopyrrole PBG into the hydroxymethylbilane pre-uroporphyrinogen in several discrete steps. This Phenylobacterium zucineum (strain HLK1) protein is Porphobilinogen deaminase.